Consider the following 1326-residue polypeptide: F-box/WD repeat-containing protein 7 (1326 aa).

Disordered stretches follow at residues 1–58 (MERG…AEVG), 123–187 (DSSS…IEDE), 318–351 (TVSN…ALSR), 399–549 (GSKA…SGCS), 615–642 (RSNP…RNGS), and 797–843 (TPRS…NPPP). The span at 9–39 (SSESVTSAGERTQSAVTSSTSTWVKSQASTS) shows a compositional bias: polar residues. The segment covering 165-187 (NDDDDDEEPEPEEDDEEELIEDE) has biased composition (acidic residues). A compositionally biased stretch (low complexity) spans 320–348 (SNPSPAASANAAAPEEASTSNSSSTSSSA). Over residues 403–464 (ANGSGTANSD…KLNLGSSLGA (62 aa)) the composition is skewed to polar residues. The segment covering 465–486 (SSCSQHRSGSSSTSKSMESSTS) has biased composition (low complexity). Polar residues predominate over residues 495-504 (VYTNTNSNDY). Low complexity-rich tracts occupy residues 510–520 (TTSGSSTSGGS), 528–546 (NVSA…SQES), and 616–631 (SNPP…GANP). 2 stretches are compositionally biased toward polar residues: residues 632–642 (TASVRQRRNGS) and 797–824 (TPRS…STPG). Position 813 is a phosphothreonine (threonine 813). Position 825 is a phosphoserine (serine 825). The 47-residue stretch at 889 to 935 (RDFISLLPRELALFVLSYLEPKDLLRAAQTCRSWRFLCDDNLLWKEK) folds into the F-box domain. WD repeat units lie at residues 992 to 1030 (GHDD…CLRT), 1033 to 1070 (GHTG…CVHT), 1073 to 1110 (GHTS…CLHV), 1113 to 1150 (GHLA…CLHT), 1153 to 1190 (GHTN…CKHT), 1193 to 1232 (GHQS…QTLS), and 1236 to 1273 (KHHS…FIRN).

As to quaternary structure, part of a SCF E3 ubiquitin-protein ligase complex. Interacts with Myc and puf. Interacts with CycE. Expressed in follicle cell epithelium and imaginal disks, particularly in the morphogenetic furrow.

The protein localises to the nucleus. It participates in protein modification; protein ubiquitination. Its function is as follows. Substrate recognition component of a SCF (SKP1-CUL1-F-box protein) E3 ubiquitin-protein ligase complex which mediates the ubiquitination and subsequent proteasomal degradation of target proteins. Probably recognizes and binds to phosphorylated target proteins. In the wing and eye, negatively regulates cell growth and proliferation by mediating the degradation of Myc and cyclin E, respectively. Required for endocycles, but not mitosis in follicle cell epithelium. The protein is F-box/WD repeat-containing protein 7 of Drosophila melanogaster (Fruit fly).